The primary structure comprises 1389 residues: uncharacterized protein (1389 aa).

A coiled-coil region spans residues 43–94 (STIAQRVSQLENEVAEINVALAEHVNELNSQEKRIDKLEKTVKKKKSNCSDD). Residues 294-353 (HKNRRSKSDNSDLSEYSSSNSDDSECTDSDGSSCSTDGSPDCTESENTESHRSHGKKKHR) form a disordered region. Composition is skewed to low complexity over residues 304 to 314 (SDLSEYSSSNS) and 322 to 335 (SDGS…SPDC). WD repeat units follow at residues 867–907 (TFTD…VKHI), 1017–1056 (GYNE…TPSG), and 1115–1156 (GISN…ILST).

It localises to the virion. This is an uncharacterized protein from Acanthamoeba polyphaga (Amoeba).